A 301-amino-acid chain; its full sequence is Ankyrin repeat domain-containing protein 29 (301 aa).

8 ANK repeats span residues 11-41, 45-74, 78-107, 111-140, 144-173, 177-206, 210-239, and 242-271; these read PLAN…DVDC, HGTT…DINL, SGTT…STEF, DGGT…NIHD, DGAT…KVNQ, DGTA…DRDA, DGTT…TLGI, and NGTS…DPSL.

This chain is Ankyrin repeat domain-containing protein 29 (ANKRD29), found in Homo sapiens (Human).